The following is a 208-amino-acid chain: Large ribosomal subunit protein uL3 (208 aa).

At Gln-149 the chain carries N5-methylglutamine.

The protein belongs to the universal ribosomal protein uL3 family. As to quaternary structure, part of the 50S ribosomal subunit. Forms a cluster with proteins L14 and L19. Post-translationally, methylated by PrmB.

One of the primary rRNA binding proteins, it binds directly near the 3'-end of the 23S rRNA, where it nucleates assembly of the 50S subunit. The sequence is that of Large ribosomal subunit protein uL3 from Haemophilus influenzae (strain PittGG).